Here is a 45-residue protein sequence, read N- to C-terminus: Iota-conotoxin-like R11.12 (45 aa).

Disulfide bonds link Cys5-Cys19, Cys12-Cys22, Cys18-Cys27, and Cys21-Cys36. At Leu43 the chain carries D-leucine. Residue Arg45 is a propeptide, removed by a carboxypeptidase.

Belongs to the conotoxin I1 superfamily. As to expression, expressed by the venom duct.

The protein localises to the secreted. Functionally, iota-conotoxins bind to voltage-gated sodium channels (Nav) and act as agonists by shifting the voltage-dependence of activation to more hyperpolarized levels. Produces general excitatory symptoms. The chain is Iota-conotoxin-like R11.12 from Conus radiatus (Rayed cone).